The primary structure comprises 215 residues: MTLAGQTIAVIDYGMGNLRSVSKALEHVAGGKQVIVTADPAVVAAAERVVFPGQGAMPDCMRELDARGLRTAVLAAAKDKPFLGICVGEQMLFEHSDEGNVPALGVFAGNVKRFPDEKMHLPTGERLKVPHMGWNEVRQKPHALWSGIADGSRFYFVHSYFVEPADLALVTGICEYGVPFTCAVGRDNIFAVQFHPEKSARDGLQLLKNFVEWQP.

Positions 7–215 constitute a Glutamine amidotransferase type-1 domain; that stretch reads TIAVIDYGMG…LLKNFVEWQP (209 aa). Cysteine 86 serves as the catalytic Nucleophile. Catalysis depends on residues histidine 195 and glutamate 197.

Heterodimer of HisH and HisF.

The protein resides in the cytoplasm. It catalyses the reaction 5-[(5-phospho-1-deoxy-D-ribulos-1-ylimino)methylamino]-1-(5-phospho-beta-D-ribosyl)imidazole-4-carboxamide + L-glutamine = D-erythro-1-(imidazol-4-yl)glycerol 3-phosphate + 5-amino-1-(5-phospho-beta-D-ribosyl)imidazole-4-carboxamide + L-glutamate + H(+). The enzyme catalyses L-glutamine + H2O = L-glutamate + NH4(+). Its pathway is amino-acid biosynthesis; L-histidine biosynthesis; L-histidine from 5-phospho-alpha-D-ribose 1-diphosphate: step 5/9. In terms of biological role, IGPS catalyzes the conversion of PRFAR and glutamine to IGP, AICAR and glutamate. The HisH subunit catalyzes the hydrolysis of glutamine to glutamate and ammonia as part of the synthesis of IGP and AICAR. The resulting ammonia molecule is channeled to the active site of HisF. The protein is Imidazole glycerol phosphate synthase subunit HisH of Dechloromonas aromatica (strain RCB).